The primary structure comprises 142 residues: Transcription antitermination protein NusB (142 aa).

It belongs to the NusB family.

Functionally, involved in transcription antitermination. Required for transcription of ribosomal RNA (rRNA) genes. Binds specifically to the boxA antiterminator sequence of the ribosomal RNA (rrn) operons. The protein is Transcription antitermination protein NusB of Roseiflexus castenholzii (strain DSM 13941 / HLO8).